Here is a 144-residue protein sequence, read N- to C-terminus: Large ribosomal subunit protein uL15 (144 aa).

The tract at residues 1–54 is disordered; that stretch reads MRLNTLSPAEGSKKAGKRLGRGIGSGLGKTGGRGHKGQKSRSGGGVRRGFEGGQ. Positions 21 to 31 are enriched in gly residues; it reads RGIGSGLGKTG.

The protein belongs to the universal ribosomal protein uL15 family. In terms of assembly, part of the 50S ribosomal subunit.

Functionally, binds to the 23S rRNA. The polypeptide is Large ribosomal subunit protein uL15 (Escherichia coli (strain K12 / MC4100 / BW2952)).